We begin with the raw amino-acid sequence, 96 residues long: Plasminogen-like protein A (96 aa).

The N-terminal stretch at 1–19 (MEHKEVVLLLLLFLKSGQG) is a signal peptide. Residues 20–96 (EPLDDYVNAQ…RMRDVVLFEK (77 aa)) form the PAN domain. Cystine bridges form between C49-C73 and C53-C61.

In terms of tissue distribution, expressed in liver.

The protein localises to the secreted. Functionally, may bind non-covalently to lysine binding sites present in the kringle structures of plasminogen. This may interfere with the binding of fibrin or alpha-2-antiplasmin to plasminogen and may result in the localization of activity at sites necessary for extracellular matrix destruction. The polypeptide is Plasminogen-like protein A (PLGLA) (Homo sapiens (Human)).